The sequence spans 408 residues: Aspartokinase 2 (408 aa).

ATP is bound at residue 7-10 (KFGG). Substrate is bound at residue 25–30 (RAIAEK). S41 lines the ATP pocket. Residues 47–49 (TDE), E74, 125–126 (LE), 150–153 (RGGS), and S153 each bind substrate. Residues 173–174 (TD) and 179–184 (FTTDPR) each bind ATP. ACT domains are found at residues 264–337 (VTIY…TESK) and 343–408 (IVGS…PSAV). Residues 289–291 (NVD), Q295, 354–355 (VA), 368–369 (LI), and 375–376 (SE) contribute to the substrate site.

The protein belongs to the aspartokinase family. As to quaternary structure, tetramer consisting of 2 isoforms Alpha (catalytic and regulation) and of a homodimer of 2 isoforms Beta (regulation).

The enzyme catalyses L-aspartate + ATP = 4-phospho-L-aspartate + ADP. It functions in the pathway amino-acid biosynthesis; L-lysine biosynthesis via DAP pathway; (S)-tetrahydrodipicolinate from L-aspartate: step 1/4. The protein operates within amino-acid biosynthesis; L-methionine biosynthesis via de novo pathway; L-homoserine from L-aspartate: step 1/3. Its pathway is amino-acid biosynthesis; L-threonine biosynthesis; L-threonine from L-aspartate: step 1/5. With respect to regulation, lysine-sensitive. Regulated by degradation in response to starvation of cells for various nutrients. Ammonium starvation induced the fastest aspartokinase II decline, followed by amino acid starvation and glucose limitation. Functionally, catalyzes the phosphorylation of the beta-carboxyl group of aspartic acid with ATP to yield 4-phospho-L-aspartate, which is involved in the branched biosynthetic pathway leading to the biosynthesis of amino acids threonine, isoleucine and methionine. This chain is Aspartokinase 2 (lysC), found in Bacillus subtilis (strain 168).